The sequence spans 511 residues: 2-isopropylmalate synthase (511 aa).

Residues 5 to 267 (LIIFDTTLRD…DTNIDTMHIL (263 aa)) form the Pyruvate carboxyltransferase domain. Mn(2+) is bound by residues aspartate 14, histidine 202, histidine 204, and asparagine 238. The regulatory domain stretch occupies residues 393-511 (KLVSLKVCTE…TVTNKAHPQI (119 aa)).

The protein belongs to the alpha-IPM synthase/homocitrate synthase family. LeuA type 1 subfamily. Homodimer. Mn(2+) serves as cofactor.

It is found in the cytoplasm. It carries out the reaction 3-methyl-2-oxobutanoate + acetyl-CoA + H2O = (2S)-2-isopropylmalate + CoA + H(+). It participates in amino-acid biosynthesis; L-leucine biosynthesis; L-leucine from 3-methyl-2-oxobutanoate: step 1/4. Catalyzes the condensation of the acetyl group of acetyl-CoA with 3-methyl-2-oxobutanoate (2-ketoisovalerate) to form 3-carboxy-3-hydroxy-4-methylpentanoate (2-isopropylmalate). The polypeptide is 2-isopropylmalate synthase (Vesicomyosocius okutanii subsp. Calyptogena okutanii (strain HA)).